Reading from the N-terminus, the 247-residue chain is ATP synthase subunit a, chloroplastic (247 aa).

The next 5 membrane-spanning stretches (helical) occupy residues 38-58 (QVLI…AIAV), 95-115 (VPFI…GALL), 134-154 (INTT…AGLT), 199-219 (LVVV…VMFL), and 220-240 (GLFT…AYIG).

This sequence belongs to the ATPase A chain family. As to quaternary structure, F-type ATPases have 2 components, CF(1) - the catalytic core - and CF(0) - the membrane proton channel. CF(1) has five subunits: alpha(3), beta(3), gamma(1), delta(1), epsilon(1). CF(0) has four main subunits: a, b, b' and c.

The protein localises to the plastid. Its subcellular location is the chloroplast thylakoid membrane. Functionally, key component of the proton channel; it plays a direct role in the translocation of protons across the membrane. This Illicium oligandrum (Star anise) protein is ATP synthase subunit a, chloroplastic.